Consider the following 1217-residue polypeptide: Disease resistance protein RPS4 (1217 aa).

Positions 14–175 constitute a TIR domain; it reads PQHQVFINFR…EIVKAVKTAL (162 aa). Residue Glu-88 is part of the active site. The NB-ARC domain maps to 211–472; sequence EQRLKDLEEK…FRSQDKDYVE (262 aa). LRR repeat units follow at residues 260–285, 436–459, 614–636, 637–659, 682–706, 708–728, 729–749, 750–774, 796–818, 819–842, and 861–887; these read HALI…LLGE, PNIV…AFLD, LKEV…DFNP, INLV…DKDT, AEKL…MKKM, MLAF…EMNL, ISLK…PLIS, DNIE…KLQR, LKAL…EIDI, SFLN…SVQY, and LSQL…NLQC. Residues 1162–1195 are disordered; sequence TEGVDGRVKKKKKTRMDNGRPKKKQRSGRDDNQT. The short motif at 1170 to 1177 is the Nuclear localization signal element; it reads KKKKKTRM.

As to quaternary structure, interacts with EDS1.

The protein resides in the nucleus. The enzyme catalyses NAD(+) + H2O = ADP-D-ribose + nicotinamide + H(+). Functionally, disease resistance (R) protein that specifically recognizes the AvrRps4 type III effector avirulence protein from Pseudomonas syringae. Resistance proteins guard the plant against pathogens that contain an appropriate avirulence protein via an indirect interaction with this avirulence protein. That triggers a defense system including the hypersensitive response, which restricts the pathogen growth. The combined presence of both regular and alternative RPS4 transcripts with truncated open reading frames (ORFs) is necessary for function. RPS4 function is regulated at multiple levels, including gene expression, alternative splicing, and protein stability. Acts as a disease resistance protein involved in resistance to fungal and bacterial pathogens, including R.solanacearum, P.syringae pv. tomato and C.higginsianum. In presence of RRS1, elicites an EDS1-dependent hypersensitive response. In Arabidopsis thaliana (Mouse-ear cress), this protein is Disease resistance protein RPS4.